The following is a 198-amino-acid chain: Large ribosomal subunit protein bL12m (198 aa).

A mitochondrion-targeting transit peptide spans 1–36; it reads MLPAAARPLWGPCLGLRAAAFRLARRQVPCVCAVRH. N6-acetyllysine is present on residues lysine 125, lysine 138, lysine 142, and lysine 144. Lysine 150 is subject to N6-acetyllysine; alternate. An N6-succinyllysine; alternate modification is found at lysine 150. Lysine 150 is covalently cross-linked (Glycyl lysine isopeptide (Lys-Gly) (interchain with G-Cter in ubiquitin)). Lysine 162 is modified (N6-succinyllysine). N6-acetyllysine is present on residues lysine 163 and lysine 173. Lysine 178 is modified (N6-acetyllysine; alternate). The residue at position 178 (lysine 178) is an N6-succinyllysine; alternate. The residue at position 185 (lysine 185) is an N6-acetyllysine.

It belongs to the bacterial ribosomal protein bL12 family. In terms of assembly, component of the mitochondrial large ribosomal subunit (mt-LSU). Mature mammalian 55S mitochondrial ribosomes consist of a small (28S) and a large (39S) subunit. The 28S small subunit contains a 12S ribosomal RNA (12S mt-rRNA) and 30 different proteins. The 39S large subunit contains a 16S rRNA (16S mt-rRNA), a copy of mitochondrial valine transfer RNA (mt-tRNA(Val)), which plays an integral structural role, and 52 different proteins. bL12m interacts with NOA1. Two mature forms are produced by differential two-step proteolytic cleavage. Cleaved by the mitochondrial processing protease to produce the long mature form and subsequently by the mitochondrial intermediate protease to produce the short mature form. In terms of processing, in the presence of CUL3, undergoes 'Lys-63'-linked ubiquitination at Lys-150 which results in proteasomal degradation.

It localises to the mitochondrion matrix. Functionally, as a component of the mitochondrial large ribosomal subunit, plays a role in mitochondrial translation. When present in mitochondria as a free protein not associated with the ribosome, associates with mitochondrial RNA polymerase POLRMT to activate transcription. Required for POLRMT stability. The chain is Large ribosomal subunit protein bL12m (MRPL12) from Homo sapiens (Human).